We begin with the raw amino-acid sequence, 1939 residues long: Myosin-6 (1939 aa).

A Myosin N-terminal SH3-like domain is found at 32 to 81 (DIRTECFVPDDKEEFVKAKIVSREGGKVTAETENGKTVTVKEDQVMQQNP). A Myosin motor domain is found at 85–780 (DKIEDMAMLT…LLGLLEEMRD (696 aa)). K129 bears the N6,N6,N6-trimethyllysine mark. 178–185 (GESGAGKT) contacts ATP. T379 bears the Phosphothreonine mark. S417 is modified (phosphoserine). Actin-binding regions lie at residues 657–679 (LNKLMTNLRTTHPHFVRCIIPNE) and 759–773 (KFGHTKVFFKAGLLG). One can recognise an IQ domain in the interval 783–812 (LSRIITRIQAQARGQLMRIEFKKMVERRDA). Residues 842-1939 (LKSAETEKEM…GAKQKMHDEE (1098 aa)) are a coiled coil. A phosphoserine mark is found at S1090 and S1139. Phosphotyrosine is present on Y1261. Phosphoserine is present on S1271. Phosphothreonine is present on residues T1277 and T1284. At S1309 the chain carries Phosphoserine. Y1310 is modified (phosphotyrosine). Residue T1311 is modified to Phosphothreonine. A Phosphoserine modification is found at S1512. 2 positions are modified to phosphothreonine: T1515 and T1681. The interval 1908-1939 (AEERADIAESQVNKLRAKSRDIGAKQKMHDEE) is disordered. Over residues 1925–1939 (KSRDIGAKQKMHDEE) the composition is skewed to basic and acidic residues.

It belongs to the TRAFAC class myosin-kinesin ATPase superfamily. Myosin family. Muscle myosin is a hexameric protein that consists of 2 heavy chain subunits (MHC), 2 alkali light chain subunits (MLC) and 2 regulatory light chain subunits (MLC-2).

It localises to the cytoplasm. The protein resides in the myofibril. In terms of biological role, muscle contraction. This is Myosin-6 (MYH6) from Mesocricetus auratus (Golden hamster).